A 430-amino-acid chain; its full sequence is 2-deoxy-scyllo-inosose synthase (430 aa).

Residues Asp42, 73–76, 105–109, 129–130, 140–142, and 151–152 each bind NAD(+); these read EVHK, GVTGN, TT, SLK, and KN. The active site involves Lys142. Co(2+) is bound at residue Glu184. The active site involves Glu244. His247 and His263 together coordinate Co(2+). Positions 371–430 are disordered; that stretch reads RGGAGGGAAEPAAARTGPVPDGPEAAVPATPGPVPAGPAAAAPLPSGPAPTAPAAAGPVP. A compositionally biased stretch (low complexity) spans 379 to 399; that stretch reads AEPAAARTGPVPDGPEAAVPA.

Belongs to the sugar phosphate cyclases superfamily. DOI synthase family. NAD(+) is required as a cofactor. It depends on Co(2+) as a cofactor.

The catalysed reaction is D-glucose 6-phosphate = 2-deoxy-L-scyllo-inosose + phosphate. The protein operates within metabolic intermediate biosynthesis; 2-deoxystreptamine biosynthesis; 2-deoxystreptamine from D-glucose 6-phosphate: step 1/4. It functions in the pathway antibiotic biosynthesis; neomycin biosynthesis. Its function is as follows. Catalyzes the intramolecular carbocycle formation from D-glucose-6-phosphate to 2-deoxy-scyllo-inosose (DOI). This Streptomyces fradiae (Streptomyces roseoflavus) protein is 2-deoxy-scyllo-inosose synthase (neoC).